A 450-amino-acid polypeptide reads, in one-letter code: UPF0210 protein CPF_1748 (450 aa).

It belongs to the UPF0210 family. Homodimer.

The protein is UPF0210 protein CPF_1748 of Clostridium perfringens (strain ATCC 13124 / DSM 756 / JCM 1290 / NCIMB 6125 / NCTC 8237 / Type A).